The primary structure comprises 323 residues: Oligodendrocyte transcription factor 2 (323 aa).

Composition is skewed to polar residues over residues 1–13 and 27–45; these read MDSD…SRPS and KGSS…STPS. The disordered stretch occupies residues 1-107; the sequence is MDSDASLVSS…KKQMTEPELQ (107 aa). Positions 76–93 are enriched in low complexity; it reads KSSSSSTSSSTSSAAASS. Residues 108–162 enclose the bHLH domain; the sequence is QLRLKINSRERKRMHDLNIAMDGLREVMPYAHGPSVRKLSKIATLLLARNYILML.

Interacts with NKX2-2. Interacts with ZNF488. Expressed in the brain, in oligodendrocytes. Strongly expressed in oligodendrogliomas, while expression is weak to moderate in astrocytomas. Expression in glioblastomas highly variable.

Its subcellular location is the nucleus. It localises to the cytoplasm. Required for oligodendrocyte and motor neuron specification in the spinal cord, as well as for the development of somatic motor neurons in the hindbrain. Functions together with ZNF488 to promote oligodendrocyte differentiation. Cooperates with OLIG1 to establish the pMN domain of the embryonic neural tube. Antagonist of V2 interneuron and of NKX2-2-induced V3 interneuron development. This is Oligodendrocyte transcription factor 2 (OLIG2) from Homo sapiens (Human).